The following is a 260-amino-acid chain: MTDILNKILATKAQEVAAQKAAVNAEHIRALAAEAAPVRSFIDSIRGKHRLNLPAVIAEIKKASPSKGLIRPDFRPAEIARAYENAGAACLSVLTDEPYFQGSPEYLKQAREAVLLPVLRKDFIIDEYQVYQARAWGADAVLLIAAALEQGQLERFEALAHELGMTVLLELHDETELEKCRNLTTPLWGVNNRNLRTFEVSLDQTLSLLPALEGKTVVTESGITGKADVEFMRARGVHTFLIGETFMRADDIGAEVGKLF.

It belongs to the TrpC family.

The enzyme catalyses 1-(2-carboxyphenylamino)-1-deoxy-D-ribulose 5-phosphate + H(+) = (1S,2R)-1-C-(indol-3-yl)glycerol 3-phosphate + CO2 + H2O. The protein operates within amino-acid biosynthesis; L-tryptophan biosynthesis; L-tryptophan from chorismate: step 4/5. The polypeptide is Indole-3-glycerol phosphate synthase (Neisseria gonorrhoeae (strain ATCC 700825 / FA 1090)).